Consider the following 66-residue polypeptide: Large ribosomal subunit protein bL33 (66 aa).

The protein belongs to the bacterial ribosomal protein bL33 family.

The sequence is that of Large ribosomal subunit protein bL33 from Wolbachia pipientis subsp. Culex pipiens (strain wPip).